Reading from the N-terminus, the 183-residue chain is GMP synthase [glutamine-hydrolyzing] subunit A (183 aa).

In terms of domain architecture, Glutamine amidotransferase type-1 spans 3 to 183 (HILVVDNHGQ…VFENFVAICE (181 aa)). The active-site Nucleophile is Cys-74. Residues His-162 and Glu-164 contribute to the active site.

Heterodimer composed of a glutamine amidotransferase subunit (A) and a GMP-binding subunit (B).

It carries out the reaction XMP + L-glutamine + ATP + H2O = GMP + L-glutamate + AMP + diphosphate + 2 H(+). The protein operates within purine metabolism; GMP biosynthesis; GMP from XMP (L-Gln route): step 1/1. Its function is as follows. Catalyzes the synthesis of GMP from XMP. This chain is GMP synthase [glutamine-hydrolyzing] subunit A, found in Halobacterium salinarum (strain ATCC 700922 / JCM 11081 / NRC-1) (Halobacterium halobium).